A 691-amino-acid polypeptide reads, in one-letter code: Protein 4.2 (691 aa).

Gly-2 carries N-myristoyl glycine lipidation. A band 3 binding region spans residues 31-39 (LFVRRGQPF). Ser-248 is modified (phosphoserine; by PKA).

It belongs to the transglutaminase superfamily. Transglutaminase family. As to quaternary structure, component of the ankyrin-1 complex in the erythrocyte, composed of ANK1, RHCE, RHAG, SLC4A1, EPB42, GYPA, GYPB and AQP1. Interacts with SLC4A1 (via the cytoplasmic domain); this interaction is mediated by the SLC4A1 Band 3-I dimer. Interacts with ANK1 (via ANK 1-13 repeats). Interacts with AQP1 (via the C-terminal). Both cAMP-dependent kinase (CAPK) and another kinase present in the red-blood cells seem to be able to phosphorylate EPB42.

It localises to the cell membrane. It is found in the cytoplasm. Its subcellular location is the cytoskeleton. Functionally, component of the ankyrin-1 complex, a multiprotein complex involved in the stability and shape of the erythrocyte membrane. In Homo sapiens (Human), this protein is Protein 4.2.